The sequence spans 208 residues: Small ribosomal subunit protein uS4 (208 aa).

An S4 RNA-binding domain is found at 98 to 159; the sequence is LRLDNVVFRL…RSKKVVRITE (62 aa).

The protein belongs to the universal ribosomal protein uS4 family. In terms of assembly, part of the 30S ribosomal subunit. Contacts protein S5. The interaction surface between S4 and S5 is involved in control of translational fidelity.

One of the primary rRNA binding proteins, it binds directly to 16S rRNA where it nucleates assembly of the body of the 30S subunit. In terms of biological role, with S5 and S12 plays an important role in translational accuracy. This Anaeromyxobacter dehalogenans (strain 2CP-1 / ATCC BAA-258) protein is Small ribosomal subunit protein uS4.